Here is a 642-residue protein sequence, read N- to C-terminus: Chaperone protein DnaK (642 aa).

Residue Thr-196 is modified to Phosphothreonine; by autocatalysis. Polar residues predominate over residues 593-603; sequence STMYQTPSGDT. Positions 593 to 642 are disordered; the sequence is STMYQTPSGDTPPSEPETGASEESKGGDKTQGDGEVDAEYEVIDGNDKDK. A compositionally biased stretch (basic and acidic residues) spans 614-624; it reads EESKGGDKTQG. The span at 626 to 636 shows a compositional bias: acidic residues; that stretch reads GEVDAEYEVID.

This sequence belongs to the heat shock protein 70 family.

Acts as a chaperone. This Chlorobium phaeobacteroides (strain BS1) protein is Chaperone protein DnaK.